Consider the following 492-residue polypeptide: MSKASALMVQGTTSDAGKSTLVAGLARALVRRGVRVAPFKPQNMALNSAVTADGGEIGRAQALQAVAARIAPHTDFNPVLLKPSSDIGAQVIIHGKVMANLSARDYHAYKPTAMAAVMASFDRLSAQYEHVLIEGAGSPAEINLRDRDIANMGFAEAADVPVVLVADIDRGGVFAHLVGTLELLSPSEQARVRGFVINRFRGDIALLQPGLDWLTERTGRPVFGVLPYLHGLFLDAEDALANGQVAADRDGAVLKVIAPVYPRISNHTDLDALRLHPQVDFRWVGPGQAIPPADLVVLPGSKSVQADLAWLRAQGWEPALRRHLRYGGKVIGICGGFQMLGSTLADPHGLEGAPSTVAGLGALDIETVLEREKQLVNVRGRLALDGEAAVAGYEIHMGVSRGADLDRPAVLLEDGRADGALSADGQVLGTYLHGLFDTPQAVAALLDWAGLKGAAGVDLNARREADLDRLADAVEAHVDMAALFGAAWPDAA.

Residues 253–441 (VLKVIAPVYP…LHGLFDTPQA (189 aa)) enclose the GATase cobBQ-type domain. Catalysis depends on cysteine 334, which acts as the Nucleophile. The active site involves histidine 433.

It belongs to the CobB/CobQ family. CobQ subfamily.

It functions in the pathway cofactor biosynthesis; adenosylcobalamin biosynthesis. Catalyzes amidations at positions B, D, E, and G on adenosylcobyrinic A,C-diamide. NH(2) groups are provided by glutamine, and one molecule of ATP is hydrogenolyzed for each amidation. This chain is Cobyric acid synthase, found in Azoarcus sp. (strain BH72).